Here is a 95-residue protein sequence, read N- to C-terminus: Glutaredoxin 1 (95 aa).

A Glutaredoxin domain is found at 1 to 95 (MNKSILHTII…DKLLEHQPKN (95 aa)). The cysteines at positions 17 and 20 are disulfide-linked.

This sequence belongs to the glutaredoxin family. In terms of assembly, monomer.

The protein resides in the cytoplasm. Has a glutathione-disulfide oxidoreductase activity in the presence of NADPH and glutathione reductase. Reduces low molecular weight disulfides and proteins. The chain is Glutaredoxin 1 (grxC1) from Rickettsia prowazekii (strain Madrid E).